A 669-amino-acid polypeptide reads, in one-letter code: MYLLIVILPLIGSFAAGFFGRFLGSRGVAVVTTTCVSLSSIFSCIAFYEVALCASACYIKIAPWIFSELFDAAWGFLFDSLTVILLLVVTIVSSLVHIYSISYMSEDPHSPRFFCYLSIFTFFMLMLVTGDNFIQLFLGWEGVGLASYLLINFWFTRIQANKAAIKAMLINRVGDFGLALGIMGCFTIFQTVDFSTIFACASAFSEPHHYFLFCNMGFHAITVICILVFIGAVGKSAQIGLHTWLPDAMEGPTPVSALIHAATMVTAGVFMIARCSPLFEYSPNALIVITFVGAMTSFFAATTGILQNDLKRVIAYSTCSQLGYMIFACGISNYSVSVFHLMNHACFKALLFLSAGSVIHAMSDEQDMRKMGGLASLLPFTYAMMLIGSLSLIGFPFLTGFYSKDVILELAYTKYTISGNFAFWLGSVSVFFTSYYSFRLLFLTFLAPTNSFKRDLSRCHDAPILMAIPLILLAFGSIFVGYLAKDMMIGLGTNFWANSLFILPKNEILAESEFATPTIIKLIPILFSTLGSFVAYSVNFVVNPLIFALKTSTFGNRLYCFFNKRWFFDKVFNDFLARSFLRFGYEVSFKALDKGAIEILGPYGISYTIRKMAQQISKIQSGFVYHYAFVMLLGLTIFISVIGLWDFISFWVDNRLYFIYIVSFLFINI.

The next 15 membrane-spanning stretches (helical) occupy residues Leu-3–Leu-23, Val-50–Phe-70, Leu-81–Ser-100, Ile-119–Gly-139, Leu-178–Phe-198, Phe-211–Gly-231, Thr-253–Ala-273, Leu-286–Leu-306, Leu-322–Met-342, Leu-377–Phe-397, Phe-423–Leu-443, Ile-464–Ala-484, Leu-522–Val-542, Ala-628–Ile-648, and Ser-649–Ile-669.

It belongs to the complex I subunit 5 family.

The protein resides in the mitochondrion inner membrane. The enzyme catalyses a ubiquinone + NADH + 5 H(+)(in) = a ubiquinol + NAD(+) + 4 H(+)(out). Functionally, core subunit of the mitochondrial membrane respiratory chain NADH dehydrogenase (Complex I) that is believed to belong to the minimal assembly required for catalysis. Complex I functions in the transfer of electrons from NADH to the respiratory chain. The immediate electron acceptor for the enzyme is believed to be ubiquinone. This chain is NADH-ubiquinone oxidoreductase chain 5 (ND5), found in Marchantia polymorpha (Common liverwort).